The chain runs to 351 residues: Silk gland factor 3 (351 aa).

2 disordered regions span residues alanine 61–arginine 88 and serine 131–serine 154. Basic and acidic residues predominate over residues aspartate 135–aspartate 145. In terms of domain architecture, POU-specific spans glutamate 149 to aspartate 223. Positions lysine 241 to threonine 300 form a DNA-binding region, homeobox. A disordered region spans residues glycine 314–histidine 351.

Belongs to the POU transcription factor family. Class-3 subfamily. As to expression, restricted to the middle silk gland.

Its subcellular location is the nucleus. In terms of biological role, involved in the transcriptional regulation of sericin-1 gene. This is Silk gland factor 3 (SGF3) from Bombyx mori (Silk moth).